Consider the following 195-residue polypeptide: Imidazoleglycerol-phosphate dehydratase (195 aa).

It belongs to the imidazoleglycerol-phosphate dehydratase family.

Its subcellular location is the cytoplasm. It carries out the reaction D-erythro-1-(imidazol-4-yl)glycerol 3-phosphate = 3-(imidazol-4-yl)-2-oxopropyl phosphate + H2O. It participates in amino-acid biosynthesis; L-histidine biosynthesis; L-histidine from 5-phospho-alpha-D-ribose 1-diphosphate: step 6/9. This Trichlorobacter lovleyi (strain ATCC BAA-1151 / DSM 17278 / SZ) (Geobacter lovleyi) protein is Imidazoleglycerol-phosphate dehydratase.